A 406-amino-acid chain; its full sequence is FBD-associated F-box protein At1g60410 (406 aa).

An F-box domain is found at 9 to 59; that stretch reads KDRLSDLPCHLLCRILSNLSTKESVRTSVLSPRWSNLWSLVSVLDLDFQDF. The FBD domain maps to 355–405; it reads MEEIKLSPVPQCVLSSLDFLQLKAPSTPSKMKLATYFRKKCTRLTKMLLSG.

The protein is FBD-associated F-box protein At1g60410 of Arabidopsis thaliana (Mouse-ear cress).